A 247-amino-acid polypeptide reads, in one-letter code: Protein LIFEGUARD 4 (247 aa).

7 consecutive transmembrane segments (helical) span residues 42 to 62 (VYSI…TVVF), 75 to 95 (AGLA…CPLY), 105 to 125 (YLLL…TCAF), 130 to 150 (VILE…VYTF), 165 to 185 (FLFG…FFPL), 188 to 208 (ISVM…IVYD), and 222 to 242 (IWAA…LLTI).

It belongs to the BI1 family.

Its subcellular location is the membrane. The chain is Protein LIFEGUARD 4 from Arabidopsis thaliana (Mouse-ear cress).